Reading from the N-terminus, the 209-residue chain is Ribosomal RNA large subunit methyltransferase E (209 aa).

The S-adenosyl-L-methionine site is built by G63, W65, D83, D99, and D124. K164 (proton acceptor) is an active-site residue.

It belongs to the class I-like SAM-binding methyltransferase superfamily. RNA methyltransferase RlmE family.

It is found in the cytoplasm. The catalysed reaction is uridine(2552) in 23S rRNA + S-adenosyl-L-methionine = 2'-O-methyluridine(2552) in 23S rRNA + S-adenosyl-L-homocysteine + H(+). Its function is as follows. Specifically methylates the uridine in position 2552 of 23S rRNA at the 2'-O position of the ribose in the fully assembled 50S ribosomal subunit. This Shewanella piezotolerans (strain WP3 / JCM 13877) protein is Ribosomal RNA large subunit methyltransferase E.